Consider the following 686-residue polypeptide: DNA ligase (686 aa).

NAD(+) contacts are provided by residues 31–35 (DSEYD), 80–81 (SL), and glutamate 109. The active-site N6-AMP-lysine intermediate is the lysine 111. Residues arginine 132, glutamate 166, lysine 280, and lysine 304 each contribute to the NAD(+) site. Residues cysteine 430, cysteine 433, cysteine 448, and cysteine 453 each coordinate Zn(2+). Residues 611–686 (NVEGILSGKT…IWSEQDLLDL (76 aa)) form the BRCT domain.

This sequence belongs to the NAD-dependent DNA ligase family. LigA subfamily. The cofactor is Mg(2+). Mn(2+) serves as cofactor.

It catalyses the reaction NAD(+) + (deoxyribonucleotide)n-3'-hydroxyl + 5'-phospho-(deoxyribonucleotide)m = (deoxyribonucleotide)n+m + AMP + beta-nicotinamide D-nucleotide.. DNA ligase that catalyzes the formation of phosphodiester linkages between 5'-phosphoryl and 3'-hydroxyl groups in double-stranded DNA using NAD as a coenzyme and as the energy source for the reaction. It is essential for DNA replication and repair of damaged DNA. This is DNA ligase from Lactococcus lactis subsp. cremoris (strain SK11).